The chain runs to 261 residues: Major biofilm matrix component (261 aa).

An N-terminal signal peptide occupies residues 1 to 27; the sequence is MGMKKKLSLGVASAALGLALVGGGTWA. Residues 241–261 form a disordered region; it reads DHTDKDGYVKENEKAHSEDKN.

This sequence belongs to the peptidase M73 family. Forms fibers. Fibers have variable length and are 10-15 nm width. Interacts with obg (AC P20964) in pull-down experiments.

It localises to the secreted. The protein localises to the forespore intermembrane space. Its function is as follows. TasA is the major protein component of the biofilm extracellular matrix. It forms amyloid fibers that bind cells together in the biofilm. Exhibits an antibacterial activity against a variety of Gram-positive and Gram-negative bacteria. In laboratory strains, is also involved in proper spore coat assembly. This chain is Major biofilm matrix component, found in Bacillus subtilis (strain 168).